Reading from the N-terminus, the 329-residue chain is Serine/threonine-protein phosphatase PP2A catalytic subunit (329 aa).

Residues 1 to 25 (MDNNMEIDAARSPEPHHLSPTTDPG) are disordered. Basic and acidic residues predominate over residues 8-17 (DAARSPEPHH). Mn(2+)-binding residues include aspartate 77, histidine 79, aspartate 105, and asparagine 137. The Proton donor role is filled by histidine 138. Residues histidine 187 and histidine 261 each contribute to the Mn(2+) site. Leucine 329 is subject to Leucine methyl ester.

The protein belongs to the PPP phosphatase family. PP-2A subfamily. The cofactor is Mn(2+).

The enzyme catalyses O-phospho-L-seryl-[protein] + H2O = L-seryl-[protein] + phosphate. The catalysed reaction is O-phospho-L-threonyl-[protein] + H2O = L-threonyl-[protein] + phosphate. Functionally, involved in hyphal morphogenesis. In Emericella nidulans (strain FGSC A4 / ATCC 38163 / CBS 112.46 / NRRL 194 / M139) (Aspergillus nidulans), this protein is Serine/threonine-protein phosphatase PP2A catalytic subunit (pphA).